The following is a 1153-amino-acid chain: Cingulin (1153 aa).

The interval 1–342 is head; the sequence is MAEPRGPVDH…LVMTTGSAKV (342 aa). A disordered region spans residues 17 to 37; that stretch reads ITEPAGDAQMRTGRRPAKDAR. Positions 38-52 match the ZIM motif; it reads ANTYGVAVRVQGIAG. The interval 44–57 is interaction with TJP1/ZO1; the sequence is AVRVQGIAGQPFVV. Serine 86, serine 126, serine 128, serine 131, serine 146, serine 205, serine 208, and serine 324 each carry phosphoserine. Disordered stretches follow at residues 131–151 and 177–253; these read SLLG…LELG and DRHQ…SRAR. Basic and acidic residues predominate over residues 207 to 220; the sequence is DSRHLRDPPEDRRS. A coiled-coil region spans residues 343–1110; it reads LAGQGELAQK…ALEKDSWRKA (768 aa). N6-acetyllysine is present on lysine 562. 3 disordered regions span residues 755–796, 823–861, and 1110–1131; these read AQRG…QKRL, QSQL…LSRL, and AARS…EEFD. Composition is skewed to basic and acidic residues over residues 772–796 and 827–853; these read ALEE…QKRL and EDYK…EAEK. The tract at residues 1111-1153 is tail; the sequence is ARSAAESSLQQEGLSSDEEFDGVYNPNSIASLLTESGLQTSSC. Polar residues predominate over residues 1115–1124; it reads AESSLQQEGL. A phosphoserine mark is found at serine 1125 and serine 1126.

Belongs to the cingulin family. As to quaternary structure, homodimer. Interacts with TJP1/ZO1 and SPEF1.

The protein localises to the cell junction. It localises to the tight junction. Probably plays a role in the formation and regulation of the tight junction (TJ) paracellular permeability barrier. In Sorex araneus (Eurasian common shrew), this protein is Cingulin.